The following is a 260-amino-acid chain: Alpha carbonic anhydrase 6 (260 aa).

The N-terminal stretch at Met-1–Ala-28 is a signal peptide. The region spanning Pro-35–Met-260 is the Alpha-carbonic anhydrase domain. The cysteines at positions 60 and 215 are disulfide-linked. His-100 functions as the Proton acceptor in the catalytic mechanism. Residues His-126 and His-128 each contribute to the Zn(2+) site. Asn-136 is a glycosylation site (N-linked (GlcNAc...) asparagine). His-145 lines the Zn(2+) pocket. A substrate-binding site is contributed by Thr-211–Ile-212.

The protein belongs to the alpha-class carbonic anhydrase family. Zn(2+) is required as a cofactor. In terms of processing, N-glycosylated.

It localises to the plastid. It is found in the chloroplast stroma. It catalyses the reaction hydrogencarbonate + H(+) = CO2 + H2O. In terms of biological role, reversible hydration of carbon dioxide. This chain is Alpha carbonic anhydrase 6 (ACA6), found in Arabidopsis thaliana (Mouse-ear cress).